Reading from the N-terminus, the 182-residue chain is NADH-quinone oxidoreductase subunit I (182 aa).

2 4Fe-4S ferredoxin-type domains span residues 52–82 and 92–121; these read LTRDPDGEERCVACNLCAVACPVGCISLQKA and EFFRINFSRCIFCGLCEEACPTTAIQLTPD. 8 residues coordinate [4Fe-4S] cluster: Cys62, Cys65, Cys68, Cys72, Cys101, Cys104, Cys107, and Cys111.

This sequence belongs to the complex I 23 kDa subunit family. NDH-1 is composed of 13 different subunits. Subunits NuoA, H, J, K, L, M, N constitute the membrane sector of the complex. It depends on [4Fe-4S] cluster as a cofactor.

The protein localises to the cell inner membrane. It carries out the reaction a quinone + NADH + 5 H(+)(in) = a quinol + NAD(+) + 4 H(+)(out). In terms of biological role, NDH-1 shuttles electrons from NADH, via FMN and iron-sulfur (Fe-S) centers, to quinones in the respiratory chain. The immediate electron acceptor for the enzyme in this species is believed to be ubiquinone. Couples the redox reaction to proton translocation (for every two electrons transferred, four hydrogen ions are translocated across the cytoplasmic membrane), and thus conserves the redox energy in a proton gradient. In Pseudomonas putida (strain ATCC 47054 / DSM 6125 / CFBP 8728 / NCIMB 11950 / KT2440), this protein is NADH-quinone oxidoreductase subunit I.